A 266-amino-acid polypeptide reads, in one-letter code: Glucosamine-6-phosphate deaminase (266 aa).

The Proton acceptor; for enolization step role is filled by Asp72. Asp141 acts as the For ring-opening step in catalysis. His143 functions as the Proton acceptor; for ring-opening step in the catalytic mechanism. Residue Glu148 is the For ring-opening step of the active site.

The protein belongs to the glucosamine/galactosamine-6-phosphate isomerase family. NagB subfamily. Homohexamer.

It catalyses the reaction alpha-D-glucosamine 6-phosphate + H2O = beta-D-fructose 6-phosphate + NH4(+). It participates in amino-sugar metabolism; N-acetylneuraminate degradation; D-fructose 6-phosphate from N-acetylneuraminate: step 5/5. Allosterically activated by N-acetylglucosamine 6-phosphate (GlcNAc6P). Catalyzes the reversible isomerization-deamination of glucosamine 6-phosphate (GlcN6P) to form fructose 6-phosphate (Fru6P) and ammonium ion. This Vibrio cholerae serotype O1 (strain ATCC 39541 / Classical Ogawa 395 / O395) protein is Glucosamine-6-phosphate deaminase.